Here is a 426-residue protein sequence, read N- to C-terminus: 3-phosphoshikimate 1-carboxyvinyltransferase (426 aa).

Residues Lys22, Ser23, and Arg27 each coordinate 3-phosphoshikimate. Lys22 provides a ligand contact to phosphoenolpyruvate. Phosphoenolpyruvate is bound by residues Gly96 and Arg124. Residues Ser170, Ser171, Gln172, Ser198, Asp314, Asn337, and Lys341 each coordinate 3-phosphoshikimate. Gln172 contacts phosphoenolpyruvate. The active-site Proton acceptor is Asp314. Phosphoenolpyruvate-binding residues include Arg345, Arg387, and Lys412.

The protein belongs to the EPSP synthase family. As to quaternary structure, monomer.

The protein resides in the cytoplasm. It catalyses the reaction 3-phosphoshikimate + phosphoenolpyruvate = 5-O-(1-carboxyvinyl)-3-phosphoshikimate + phosphate. Its pathway is metabolic intermediate biosynthesis; chorismate biosynthesis; chorismate from D-erythrose 4-phosphate and phosphoenolpyruvate: step 6/7. Catalyzes the transfer of the enolpyruvyl moiety of phosphoenolpyruvate (PEP) to the 5-hydroxyl of shikimate-3-phosphate (S3P) to produce enolpyruvyl shikimate-3-phosphate and inorganic phosphate. The sequence is that of 3-phosphoshikimate 1-carboxyvinyltransferase from Shewanella pealeana (strain ATCC 700345 / ANG-SQ1).